The following is a 248-amino-acid chain: 2,3-bisphosphoglycerate-dependent phosphoglycerate mutase (248 aa).

Residues Arg-8–Asn-15, Thr-21–Gly-22, Arg-60, Glu-87–Tyr-90, Lys-98, Arg-114–Arg-115, and Gly-183–Asn-184 each bind substrate. His-9 functions as the Tele-phosphohistidine intermediate in the catalytic mechanism. Residue Glu-87 is the Proton donor/acceptor of the active site.

The protein belongs to the phosphoglycerate mutase family. BPG-dependent PGAM subfamily.

The catalysed reaction is (2R)-2-phosphoglycerate = (2R)-3-phosphoglycerate. It participates in carbohydrate degradation; glycolysis; pyruvate from D-glyceraldehyde 3-phosphate: step 3/5. Its function is as follows. Catalyzes the interconversion of 2-phosphoglycerate and 3-phosphoglycerate. The protein is 2,3-bisphosphoglycerate-dependent phosphoglycerate mutase of Borreliella afzelii (strain PKo) (Borrelia afzelii).